The following is a 294-amino-acid chain: Thymidylate synthase (294 aa).

DUMP contacts are provided by residues Arg31 and 156–157 (RR). Cys176 (nucleophile) is an active-site residue. DUMP-binding positions include 196–199 (RSAD), Asn207, and 237–239 (HIY). Asp199 lines the (6R)-5,10-methylene-5,6,7,8-tetrahydrofolate pocket. Ala293 is a binding site for (6R)-5,10-methylene-5,6,7,8-tetrahydrofolate.

The protein belongs to the thymidylate synthase family. Homodimer.

The catalysed reaction is dUMP + (6R)-5,10-methylene-5,6,7,8-tetrahydrofolate = 7,8-dihydrofolate + dTMP. It participates in pyrimidine metabolism; dTTP biosynthesis. This is Thymidylate synthase (70) from Saimiri sciureus (Common squirrel monkey).